We begin with the raw amino-acid sequence, 172 residues long: uncharacterized protein (172 aa).

The protein belongs to the flavoredoxin family. It depends on FMN as a cofactor.

This is an uncharacterized protein from Pyrococcus horikoshii (strain ATCC 700860 / DSM 12428 / JCM 9974 / NBRC 100139 / OT-3).